A 986-amino-acid polypeptide reads, in one-letter code: Epidermin biosynthesis protein EpiB (986 aa).

It to B.subtilis SpaB and L.lactis NisB.

The protein localises to the cell membrane. Functionally, involved in the post-translational modification of the lantibiotic epidermin. The protein is Epidermin biosynthesis protein EpiB (epiB) of Staphylococcus epidermidis.